The chain runs to 95 residues: Small ribosomal subunit protein bS6 (95 aa).

This sequence belongs to the bacterial ribosomal protein bS6 family.

In terms of biological role, binds together with bS18 to 16S ribosomal RNA. This is Small ribosomal subunit protein bS6 from Desulforamulus reducens (strain ATCC BAA-1160 / DSM 100696 / MI-1) (Desulfotomaculum reducens).